We begin with the raw amino-acid sequence, 293 residues long: 33 kDa chaperonin (293 aa).

2 disulfides stabilise this stretch: C238-C240 and C271-C274.

The protein belongs to the HSP33 family. In terms of processing, under oxidizing conditions two disulfide bonds are formed involving the reactive cysteines. Under reducing conditions zinc is bound to the reactive cysteines and the protein is inactive.

The protein resides in the cytoplasm. In terms of biological role, redox regulated molecular chaperone. Protects both thermally unfolding and oxidatively damaged proteins from irreversible aggregation. Plays an important role in the bacterial defense system toward oxidative stress. This is 33 kDa chaperonin from Clostridium beijerinckii (strain ATCC 51743 / NCIMB 8052) (Clostridium acetobutylicum).